Here is a 175-residue protein sequence, read N- to C-terminus: Peptide methionine sulfoxide reductase MsrA (175 aa).

Residue Cys10 is part of the active site.

It belongs to the MsrA Met sulfoxide reductase family.

The catalysed reaction is L-methionyl-[protein] + [thioredoxin]-disulfide + H2O = L-methionyl-(S)-S-oxide-[protein] + [thioredoxin]-dithiol. The enzyme catalyses [thioredoxin]-disulfide + L-methionine + H2O = L-methionine (S)-S-oxide + [thioredoxin]-dithiol. Functionally, has an important function as a repair enzyme for proteins that have been inactivated by oxidation. Catalyzes the reversible oxidation-reduction of methionine sulfoxide in proteins to methionine. The polypeptide is Peptide methionine sulfoxide reductase MsrA (Clavibacter michiganensis subsp. michiganensis (strain NCPPB 382)).